Here is a 768-residue protein sequence, read N- to C-terminus: Phosphoribosylformylglycinamidine synthase subunit PurL (768 aa).

Residue His53 is part of the active site. An ATP-binding site is contributed by Tyr56. Position 98 (Glu98) interacts with Mg(2+). Substrate is bound by residues 99–102 (SHNH) and Arg121. Catalysis depends on His100, which acts as the Proton acceptor. Position 122 (Asp122) interacts with Mg(2+). Position 253 (Gln253) interacts with substrate. Asp285 contributes to the Mg(2+) binding site. 328–330 (ETQ) provides a ligand contact to substrate. ATP contacts are provided by Asp516 and Gly561. Asn562 contributes to the Mg(2+) binding site. Residue Ser564 participates in substrate binding.

This sequence belongs to the FGAMS family. In terms of assembly, monomer. Part of the FGAM synthase complex composed of 1 PurL, 1 PurQ and 2 PurS subunits.

It is found in the cytoplasm. The catalysed reaction is N(2)-formyl-N(1)-(5-phospho-beta-D-ribosyl)glycinamide + L-glutamine + ATP + H2O = 2-formamido-N(1)-(5-O-phospho-beta-D-ribosyl)acetamidine + L-glutamate + ADP + phosphate + H(+). It participates in purine metabolism; IMP biosynthesis via de novo pathway; 5-amino-1-(5-phospho-D-ribosyl)imidazole from N(2)-formyl-N(1)-(5-phospho-D-ribosyl)glycinamide: step 1/2. Part of the phosphoribosylformylglycinamidine synthase complex involved in the purines biosynthetic pathway. Catalyzes the ATP-dependent conversion of formylglycinamide ribonucleotide (FGAR) and glutamine to yield formylglycinamidine ribonucleotide (FGAM) and glutamate. The FGAM synthase complex is composed of three subunits. PurQ produces an ammonia molecule by converting glutamine to glutamate. PurL transfers the ammonia molecule to FGAR to form FGAM in an ATP-dependent manner. PurS interacts with PurQ and PurL and is thought to assist in the transfer of the ammonia molecule from PurQ to PurL. This Methanothrix thermoacetophila (strain DSM 6194 / JCM 14653 / NBRC 101360 / PT) (Methanosaeta thermophila) protein is Phosphoribosylformylglycinamidine synthase subunit PurL.